The sequence spans 125 residues: Phosphoribosyl-AMP cyclohydrolase (125 aa).

Aspartate 86 contributes to the Mg(2+) binding site. Cysteine 87 serves as a coordination point for Zn(2+). 2 residues coordinate Mg(2+): aspartate 88 and aspartate 90. Cysteine 103 and cysteine 110 together coordinate Zn(2+).

Belongs to the PRA-CH family. As to quaternary structure, homodimer. It depends on Mg(2+) as a cofactor. Zn(2+) serves as cofactor.

The protein resides in the cytoplasm. It catalyses the reaction 1-(5-phospho-beta-D-ribosyl)-5'-AMP + H2O = 1-(5-phospho-beta-D-ribosyl)-5-[(5-phospho-beta-D-ribosylamino)methylideneamino]imidazole-4-carboxamide. Its pathway is amino-acid biosynthesis; L-histidine biosynthesis; L-histidine from 5-phospho-alpha-D-ribose 1-diphosphate: step 3/9. Functionally, catalyzes the hydrolysis of the adenine ring of phosphoribosyl-AMP. The chain is Phosphoribosyl-AMP cyclohydrolase from Erythrobacter litoralis (strain HTCC2594).